Consider the following 425-residue polypeptide: Serine--tRNA ligase (425 aa).

Position 231-233 (threonine 231–glutamate 233) interacts with L-serine. Residues arginine 262–glutamate 264 and valine 278 each bind ATP. An L-serine-binding site is contributed by glutamate 285. Glutamate 349 to serine 352 lines the ATP pocket. Residue threonine 384 participates in L-serine binding.

Belongs to the class-II aminoacyl-tRNA synthetase family. Type-1 seryl-tRNA synthetase subfamily. As to quaternary structure, homodimer. The tRNA molecule binds across the dimer.

It localises to the cytoplasm. The catalysed reaction is tRNA(Ser) + L-serine + ATP = L-seryl-tRNA(Ser) + AMP + diphosphate + H(+). It catalyses the reaction tRNA(Sec) + L-serine + ATP = L-seryl-tRNA(Sec) + AMP + diphosphate + H(+). It participates in aminoacyl-tRNA biosynthesis; selenocysteinyl-tRNA(Sec) biosynthesis; L-seryl-tRNA(Sec) from L-serine and tRNA(Sec): step 1/1. Catalyzes the attachment of serine to tRNA(Ser). Is also able to aminoacylate tRNA(Sec) with serine, to form the misacylated tRNA L-seryl-tRNA(Sec), which will be further converted into selenocysteinyl-tRNA(Sec). In Dictyoglomus turgidum (strain DSM 6724 / Z-1310), this protein is Serine--tRNA ligase.